Reading from the N-terminus, the 780-residue chain is Acyl-CoA dehydrogenase family member 11 (780 aa).

Position 177 is an N6-acetyllysine (Lys-177). Tyr-324 carries the post-translational modification Phosphotyrosine. Residue Lys-391 is modified to N6-succinyllysine. FAD contacts are provided by residues 504–514 and 538–540; these read FCMTEPDVASS and WSS. Ser-514 serves as a coordination point for substrate. 629–632 serves as a coordination point for substrate; the sequence is GPGR. Residues Arg-657, Gln-727, and 727-731 contribute to the FAD site; that span reads QVCGG. Gly-755 contacts substrate. FAD is bound at residue 756-758; the sequence is PDE.

This sequence belongs to the acyl-CoA dehydrogenase family. As to quaternary structure, homodimer. FAD is required as a cofactor. In terms of tissue distribution, widely expressed with highest levels in brain followed by liver, heart and kidney.

The protein localises to the peroxisome. It localises to the mitochondrion membrane. The catalysed reaction is a 2,3-saturated acyl-CoA + oxidized [electron-transfer flavoprotein] + H(+) = a (2E)-enoyl-CoA + reduced [electron-transfer flavoprotein]. It carries out the reaction docosanoyl-CoA + oxidized [electron-transfer flavoprotein] + H(+) = (2E)-docosenoyl-CoA + reduced [electron-transfer flavoprotein]. The enzyme catalyses tetracosanoyl-CoA + oxidized [electron-transfer flavoprotein] + H(+) = (2E)-tetracosenoyl-CoA + reduced [electron-transfer flavoprotein]. It catalyses the reaction eicosanoyl-CoA + oxidized [electron-transfer flavoprotein] + H(+) = (2E)-eicosenoyl-CoA + reduced [electron-transfer flavoprotein]. The catalysed reaction is hexacosanoyl-CoA + oxidized [electron-transfer flavoprotein] + H(+) = (2E)-hexacosenoyl-CoA + reduced [electron-transfer flavoprotein]. It carries out the reaction tricosanoyl-CoA + oxidized [electron-transfer flavoprotein] + H(+) = (2E)-tricosenoyl-CoA + reduced [electron-transfer flavoprotein]. It participates in lipid metabolism; fatty acid beta-oxidation. Its function is as follows. Acyl-CoA dehydrogenase, that exhibits maximal activity towards saturated C22-CoA. Probably participates in beta-oxydation and energy production but could also play a role in the metabolism of specific fatty acids to control fatty acids composition of cellular lipids in brain. This Homo sapiens (Human) protein is Acyl-CoA dehydrogenase family member 11 (ACAD11).